The sequence spans 780 residues: Putative ABC transporter ATP-binding protein BL0043 (780 aa).

ABC transporter domains follow at residues 2 to 238 (LKDI…QSET) and 282 to 531 (IRVS…GPAH). Residue 34–41 (GPNGSGKS) participates in ATP binding. The segment at 230-272 (AEAVSQSETEGSIGTEAAPSRPTNDSPRQREREDGSELPLLSD) is disordered. 316–323 (GVNGSGKS) is an ATP binding site. The next 4 helical transmembrane spans lie at 551 to 573 (FTMFAVNTPTQLALGIAITLAVI), 586 to 608 (SIHPILILLVLMGVVNLFVVRTG), 623 to 645 (GVTIAVLYACRFALVIILGAVFL), and 759 to 778 (IAARDLIFAAAVIIYIAAII).

This sequence belongs to the ABC transporter superfamily.

Its subcellular location is the cell membrane. Functionally, probably part of an ABC transporter complex. Responsible for energy coupling to the transport system. This chain is Putative ABC transporter ATP-binding protein BL0043, found in Bifidobacterium longum (strain NCC 2705).